The chain runs to 221 residues: Translation initiation factor 6 (221 aa).

Belongs to the eIF-6 family.

Binds to the 50S ribosomal subunit and prevents its association with the 30S ribosomal subunit to form the 70S initiation complex. The polypeptide is Translation initiation factor 6 (Methanocella arvoryzae (strain DSM 22066 / NBRC 105507 / MRE50)).